The sequence spans 167 residues: UPF0114 protein Tola_1474 (167 aa).

Helical transmembrane passes span 15–35 (IMAPIYLGLSLALLALGIKFF), 53–73 (LILIILSLIDISLVGGLIVMV), 109–129 (VAASIVAISSIHLLKVFMNTE), and 136–156 (IKWYLLIHITFVMSAFAMGYL).

This sequence belongs to the UPF0114 family.

The protein localises to the cell membrane. The chain is UPF0114 protein Tola_1474 from Tolumonas auensis (strain DSM 9187 / NBRC 110442 / TA 4).